Reading from the N-terminus, the 419-residue chain is L-rhamnose isomerase (419 aa).

Mn(2+)-binding residues include H262, D294, and D296.

The protein belongs to the rhamnose isomerase family. As to quaternary structure, homotetramer. The cofactor is Mn(2+).

The protein localises to the cytoplasm. The enzyme catalyses L-rhamnopyranose = L-rhamnulose. Its pathway is carbohydrate degradation; L-rhamnose degradation; glycerone phosphate from L-rhamnose: step 1/3. Its function is as follows. Catalyzes the interconversion of L-rhamnose and L-rhamnulose. The sequence is that of L-rhamnose isomerase from Enterobacter sp. (strain 638).